Consider the following 416-residue polypeptide: N-acetyl-L-cysteine deacetylase (416 aa).

5 residues coordinate Zn(2+): Cys-128, His-130, Glu-164, His-188, and His-380.

Belongs to the peptidase M20 family. Requires Zn(2+) as cofactor. It depends on Co(2+) as a cofactor.

It catalyses the reaction N-acetyl-L-cysteine + H2O = L-cysteine + acetate. The protein operates within amino-acid metabolism. Involved in a cysteine salvage pathway from S-alkylcysteine. Catalyzes the last step in this pathway, i.e. the deacetylation of N-acetyl-L-cysteine. This pathway is likely important in the catabolism of alkylated cysteine generated by proteolysis of alkylated glutathione formed in the detoxification of a wide range of electrophiles. In Bacillus subtilis (strain 168), this protein is N-acetyl-L-cysteine deacetylase.